A 283-amino-acid chain; its full sequence is Quinate/shikimate dehydrogenase (NAD(+)) (283 aa).

Shikimate-binding residues include Ser17, Thr69, Lys73, Asn94, and Asp110. L-quinate contacts are provided by residues 17 to 19 (SRT), Thr69, Lys73, Asn94, and Asp110. Lys73 functions as the Proton acceptor in the catalytic mechanism. Residues 137 to 138 (GV), Asp158, Arg163, 203 to 206 (PMGM), Ala213, Val228, and Gly251 each bind NAD(+). Gln258 provides a ligand contact to shikimate. Residue Gln258 participates in L-quinate binding.

The protein belongs to the shikimate dehydrogenase family. In terms of assembly, homodimer.

The enzyme catalyses L-quinate + NAD(+) = 3-dehydroquinate + NADH + H(+). It catalyses the reaction shikimate + NAD(+) = 3-dehydroshikimate + NADH + H(+). It participates in metabolic intermediate biosynthesis; chorismate biosynthesis; chorismate from D-erythrose 4-phosphate and phosphoenolpyruvate: step 4/7. Its pathway is aromatic compound metabolism; 3,4-dihydroxybenzoate biosynthesis; 3-dehydroquinate from D-quinate (NAD(+) route). Functionally, involved in the biosynthesis of the chorismate, which leads to the biosynthesis of aromatic amino acids, and plays a key role in the quinate degradation pathway. Catalyzes the NAD(+)-dependent oxidation of both quinate and shikimate to 3-dehydroquinate and 3-dehydroshikimate, respectively. It can only use NAD. This chain is Quinate/shikimate dehydrogenase (NAD(+)), found in Corynebacterium glutamicum (strain ATCC 13032 / DSM 20300 / JCM 1318 / BCRC 11384 / CCUG 27702 / LMG 3730 / NBRC 12168 / NCIMB 10025 / NRRL B-2784 / 534).